We begin with the raw amino-acid sequence, 282 residues long: Small-conductance mechanosensitive channel (282 aa).

The Periplasmic segment spans residues 1-23 (MWADIYHKLVEIYDIKAVKFLLD). A helical transmembrane segment spans residues 24–46 (VLKILIIAFIGIKFADFLIYRFY). The Cytoplasmic portion of the chain corresponds to 47–66 (KLYSKSKIQLPQRKIDTLTS). The helical transmembrane segment at 67 to 87 (LTKNAVRYIIYFLAGASILKL) threads the bilayer. The Periplasmic portion of the chain corresponds to 88–89 (FN). A helical transmembrane segment spans residues 90 to 110 (IDMTSLLAVAGIGSLAIGFGA). Residues 111-282 (QNLVKDMISG…TVILSEKKTN (172 aa)) are Cytoplasmic-facing.

The protein belongs to the MscS (TC 1.A.23) family. Homoheptamer.

Its subcellular location is the cell inner membrane. In terms of biological role, mechanosensitive ion channel that participates in the regulation of osmotic pressure changes within the cell, opening in response to stretch forces in the membrane lipid bilayer, without the need for other proteins. Has high selectivity for anions, and may contribute to resistance to hypoosmotic shock. In Caldanaerobacter subterraneus subsp. tengcongensis (strain DSM 15242 / JCM 11007 / NBRC 100824 / MB4) (Thermoanaerobacter tengcongensis), this protein is Small-conductance mechanosensitive channel.